The primary structure comprises 457 residues: UDP-N-acetylmuramoyl-tripeptide--D-alanyl-D-alanine ligase (457 aa).

An ATP-binding site is contributed by 113–119 (GSNGKTT).

Belongs to the MurCDEF family. MurF subfamily.

The protein resides in the cytoplasm. The catalysed reaction is D-alanyl-D-alanine + UDP-N-acetyl-alpha-D-muramoyl-L-alanyl-gamma-D-glutamyl-meso-2,6-diaminopimelate + ATP = UDP-N-acetyl-alpha-D-muramoyl-L-alanyl-gamma-D-glutamyl-meso-2,6-diaminopimeloyl-D-alanyl-D-alanine + ADP + phosphate + H(+). Its pathway is cell wall biogenesis; peptidoglycan biosynthesis. In terms of biological role, involved in cell wall formation. Catalyzes the final step in the synthesis of UDP-N-acetylmuramoyl-pentapeptide, the precursor of murein. The chain is UDP-N-acetylmuramoyl-tripeptide--D-alanyl-D-alanine ligase from Bacillus subtilis (strain 168).